The following is a 353-amino-acid chain: Transcription factor MafA (353 aa).

At serine 14 the chain carries Phosphoserine. A Glycyl lysine isopeptide (Lys-Gly) (interchain with G-Cter in SUMO2) cross-link involves residue lysine 32. Disordered stretches follow at residues 40–108 (RFCH…GGTS) and 177–219 (ADDM…GAGH). A compositionally biased stretch (low complexity) spans 46–73 (PPGSLSSTPLSTPCSSVPSSPSFCAPSP). Serine 49 is subject to Phosphoserine. Residues threonine 53 and threonine 57 each carry the phosphothreonine modification. Phosphoserine occurs at positions 61 and 65. A compositionally biased stretch (gly residues) spans 74–93 (GTGGGGGAGGGGGSSQAGGA). The segment covering 183–210 (GHHHGAHHAAHHHHAAHHHHHHHHHHGG) has biased composition (basic residues). The basic motif stretch occupies residues 254-279 (RLKQKRRTLKNRGYAQSCRFKRVQQR). The bZIP domain maps to 254-317 (RLKQKRRTLK…DLYKEKYEKL (64 aa)). Residues 282-303 (LESEKCQLQSQVEQLKLEVGRL) are leucine-zipper. Residues 315-353 (EKLAGRGGPGSAGGAGFPREPSPPQAGPGGAKGTADFFL) are disordered. The segment covering 319–330 (GRGGPGSAGGAG) has biased composition (gly residues).

The protein belongs to the bZIP family. Maf subfamily. Forms homodimers or heterodimers. Monomers and dimers are able to bind DNA, but the off-rate is faster for monomers. Interacts with NEUROD1 and PDX1. May interact with MAFB, FOS, JUN and PCAF. Post-translationally, ubiquitinated, leading to its degradation by the proteasome. Phosphorylated at tyrosines. In terms of tissue distribution, expressed in the islets of Langerhans (at protein level).

The protein resides in the nucleus. In terms of biological role, transcription factor that activates insulin gene expression. Acts synergistically with NEUROD1/BETA2 and PDX1. Binds the insulin enhancer C1/RIPE3b element. Binds to consensus TRE-type MARE 5'-TGCTGACTCAGCA-3' DNA sequence. The protein is Transcription factor MafA (MAFA) of Homo sapiens (Human).